Reading from the N-terminus, the 248-residue chain is MGQKVNPVGLRLGINRTWDSRWFANKGDYGTLLHEDIKIRQMLLKQLKQAAVSKVVIERPHKKCRVTIYSARPGVVIGKKGADIDKLRKKVADMTKSEVFINIVEIRKPEIDARLVAESIAQQLERRVAFRRAMKRAVQSAMRLGAEGIRINCSGRLGGAEIARLEWYREGRVPLHTLRADVDYGTATAFTTYGTCGVKVWIFKGEILEHDPMAVDKRMTAESEGPSSGRPPRRDRDRDRDRDRDSAA.

In terms of domain architecture, KH type-2 spans 39 to 107 (IRQMLLKQLK…EVFINIVEIR (69 aa)). The interval 214 to 248 (AVDKRMTAESEGPSSGRPPRRDRDRDRDRDRDSAA) is disordered. The span at 232 to 248 (PRRDRDRDRDRDRDSAA) shows a compositional bias: basic and acidic residues.

It belongs to the universal ribosomal protein uS3 family. As to quaternary structure, part of the 30S ribosomal subunit. Forms a tight complex with proteins S10 and S14.

Its function is as follows. Binds the lower part of the 30S subunit head. Binds mRNA in the 70S ribosome, positioning it for translation. This Azorhizobium caulinodans (strain ATCC 43989 / DSM 5975 / JCM 20966 / LMG 6465 / NBRC 14845 / NCIMB 13405 / ORS 571) protein is Small ribosomal subunit protein uS3.